Reading from the N-terminus, the 428-residue chain is Enolase (428 aa).

Gln162 contacts (2R)-2-phosphoglycerate. Glu204 acts as the Proton donor in catalysis. The Mg(2+) site is built by Asp241, Glu283, and Asp310. (2R)-2-phosphoglycerate contacts are provided by Lys335, Arg364, Ser365, and Lys386. Lys335 acts as the Proton acceptor in catalysis.

It belongs to the enolase family. The cofactor is Mg(2+).

It localises to the cytoplasm. The protein localises to the secreted. Its subcellular location is the cell surface. The enzyme catalyses (2R)-2-phosphoglycerate = phosphoenolpyruvate + H2O. Its pathway is carbohydrate degradation; glycolysis; pyruvate from D-glyceraldehyde 3-phosphate: step 4/5. Catalyzes the reversible conversion of 2-phosphoglycerate (2-PG) into phosphoenolpyruvate (PEP). It is essential for the degradation of carbohydrates via glycolysis. The chain is Enolase from Nocardia farcinica (strain IFM 10152).